Consider the following 237-residue polypeptide: Mannose-specific lectin alpha chain (237 aa).

The Mn(2+) site is built by Glu8 and Asp10. Asp10, Tyr12, Asn14, and Asp19 together coordinate Ca(2+). Position 12 (Tyr12) interacts with a carbohydrate. Residues Asp19, His24, and Ser34 each contribute to the Mn(2+) site. 99–100 (LY) lines the a carbohydrate pocket. Ca(2+) is bound at residue Asp208. Position 228 (Arg228) interacts with a carbohydrate.

Belongs to the leguminous lectin family. Homotetramer. Post-translationally, the beta and gamma chains are produced by partial proteolytic processing of the lectin alpha chain by an asparaginyl endopeptidase.

Its function is as follows. D-mannose/D-glucose-binding lectin. Also binds derivatives of glucose and mannose such as more complex glycans. This is Mannose-specific lectin alpha chain from Cymbosema roseum (Dioclea purpurea).